The chain runs to 239 residues: Ribose-5-phosphate isomerase A (239 aa).

Substrate-binding positions include S30–T33, D87–D90, and K100–G103. E109 functions as the Proton acceptor in the catalytic mechanism. K127 serves as a coordination point for substrate.

It belongs to the ribose 5-phosphate isomerase family. Homodimer.

The enzyme catalyses aldehydo-D-ribose 5-phosphate = D-ribulose 5-phosphate. Its pathway is carbohydrate degradation; pentose phosphate pathway; D-ribose 5-phosphate from D-ribulose 5-phosphate (non-oxidative stage): step 1/1. Catalyzes the reversible conversion of ribose-5-phosphate to ribulose 5-phosphate. The protein is Ribose-5-phosphate isomerase A of Synechococcus sp. (strain CC9605).